Consider the following 122-residue polypeptide: Small ribosomal subunit protein uS13 (122 aa).

The tract at residues 95 to 122 (GLPVHGQRTHTNARTRKGPRRGAVGKKK) is disordered.

The protein belongs to the universal ribosomal protein uS13 family. In terms of assembly, part of the 30S ribosomal subunit. Forms a loose heterodimer with protein S19. Forms two bridges to the 50S subunit in the 70S ribosome.

Located at the top of the head of the 30S subunit, it contacts several helices of the 16S rRNA. In the 70S ribosome it contacts the 23S rRNA (bridge B1a) and protein L5 of the 50S subunit (bridge B1b), connecting the 2 subunits; these bridges are implicated in subunit movement. Contacts the tRNAs in the A and P-sites. The protein is Small ribosomal subunit protein uS13 of Desulfovibrio desulfuricans (strain ATCC 27774 / DSM 6949 / MB).